The following is a 266-amino-acid chain: MFKHTRKLQYNAKPDRSDPIMARRLQESLGGQWGETTGMMSYLSQGWASTGAEKYKDLLLDTGTEEMAHVEMISTMIGYLLEDAPFGPEDLKRDPSLATTMAGMDPEHSLVHGLNASLNNPNGAAWNAGYVTSSGNLVADMRFNVVRESEARLQVSRLYSMTEDEGVRDMLKFLLARETQHQLQFMKAQEELEEKYGIIVPGDMKEIEHSEFSHVLMNFSDGDGSKAFEGQVAKDGEKFTYQENPEAMGGIPHIKPGDPRLHNHQG.

Residue glutamate 35 coordinates Mn(2+). Ca(2+) is bound by residues aspartate 57 and aspartate 61. Glutamate 66, histidine 69, glutamate 148, and histidine 181 together coordinate Mn(2+). Residues asparagine 218, serine 220, and glycine 222 each contribute to the Ca(2+) site. The segment at 243–266 (ENPEAMGGIPHIKPGDPRLHNHQG) is disordered. The span at 255 to 266 (KPGDPRLHNHQG) shows a compositional bias: basic and acidic residues.

Belongs to the manganese catalase family. As to quaternary structure, homohexamer. Ca(2+) serves as cofactor. Requires Mn(2+) as cofactor.

The catalysed reaction is 2 H2O2 = O2 + 2 H2O. Catalyzes the decomposition of hydrogen peroxide into water and oxygen. This Lactiplantibacillus plantarum (Lactobacillus plantarum) protein is Manganese catalase.